The primary structure comprises 227 residues: Prolactin-5A1 (227 aa).

The N-terminal stretch at 1–27 (MQIQPHPSGALLLLLLSNLLMWENVAS) is a signal peptide. Residue N47 is glycosylated (N-linked (GlcNAc...) asparagine). C85 and C204 form a disulfide bridge.

The protein belongs to the somatotropin/prolactin family. In terms of tissue distribution, expressed specifically in placenta. Highly expressed in invasive trophoblast cells lining the central placental vessel.

The protein localises to the secreted. In Rattus norvegicus (Rat), this protein is Prolactin-5A1 (Prl5a1).